A 361-amino-acid polypeptide reads, in one-letter code: 3-dehydroquinate synthase (361 aa).

Residues asparagine 41, 70–75 (DGEQYK), 104–108 (GVIGD), 128–129 (TT), lysine 141, lysine 150, 150–151 (KN), and 168–171 (CLTT) each bind NAD(+). Zn(2+) contacts are provided by glutamate 183, histidine 246, and histidine 263.

Belongs to the sugar phosphate cyclases superfamily. Dehydroquinate synthase family. NAD(+) is required as a cofactor. It depends on Co(2+) as a cofactor. Zn(2+) serves as cofactor.

The protein resides in the cytoplasm. The catalysed reaction is 7-phospho-2-dehydro-3-deoxy-D-arabino-heptonate = 3-dehydroquinate + phosphate. It participates in metabolic intermediate biosynthesis; chorismate biosynthesis; chorismate from D-erythrose 4-phosphate and phosphoenolpyruvate: step 2/7. Catalyzes the conversion of 3-deoxy-D-arabino-heptulosonate 7-phosphate (DAHP) to dehydroquinate (DHQ). In Vibrio cholerae serotype O1 (strain ATCC 39315 / El Tor Inaba N16961), this protein is 3-dehydroquinate synthase.